A 105-amino-acid chain; its full sequence is uncharacterized protein (105 aa).

A helical transmembrane segment spans residues 41 to 62 (GIITKIAASPFVIVLYFNTAFF).

It localises to the membrane. This is an uncharacterized protein from Saccharomyces cerevisiae (strain ATCC 204508 / S288c) (Baker's yeast).